The primary structure comprises 416 residues: Enterobactin exporter EntS (416 aa).

At 1 to 21 (MNKQSWLLNLSLLKTHPAFRA) the chain is on the cytoplasmic side. A helical membrane pass occupies residues 22-42 (VFLARFISIVSLGLLGVAVPV). Residues 43-55 (QIQMMTHSTWQVG) lie on the Periplasmic side of the membrane. Residues 56-76 (LSVTLTGGAMFVGLMVGGVLA) traverse the membrane as a helical segment. The Cytoplasmic segment spans residues 77–83 (DRYERKK). The chain crosses the membrane as a helical span at residues 84–104 (VILLARGTCGIGFIGLCLNAL). Residues 105–109 (LPEPS) lie on the Periplasmic side of the membrane. The chain crosses the membrane as a helical span at residues 110-130 (LLAIYLLGLWDGFFASLGVTA). At 131-156 (LLAATPALVGRENLMQAGAITMLTVR) the chain is on the cytoplasmic side. Residues 157–177 (LGSVISPMIGGLLLATGGVAW) traverse the membrane as a helical segment. Position 178 (asparagine 178) is a topological domain, periplasmic. Residues 179 to 199 (YGLAAAGTFITLLPLLSLPAL) traverse the membrane as a helical segment. Over 200 to 218 (PPPPQPREHPLKSLLAGFR) the chain is Cytoplasmic. The chain crosses the membrane as a helical span at residues 219–239 (FLLASPLVGGIALLGGLLTMA). Residues 240 to 256 (SAVRVLYPALADNWQMS) lie on the Periplasmic side of the membrane. A helical transmembrane segment spans residues 257-277 (AAQIGFLYAAIPLGAAIGALT). At 278-287 (SGKLAHSARP) the chain is on the cytoplasmic side. Residues 288–307 (GLLMLLSTLGSFLAIGLFGL) traverse the membrane as a helical segment. Topologically, residues 308 to 313 (MPMWIL) are periplasmic. Residues 314–336 (GVICLALFGWLSAVSSLLQYTML) traverse the membrane as a helical segment. The Cytoplasmic segment spans residues 337–356 (QTQTPEAMLGRINGLWTAQN). The chain crosses the membrane as a helical span at residues 357-377 (VTGDAIGAALLGGLGAMMTPV). Alanine 378 is a topological domain (periplasmic). Residues 379–399 (SASASGFGLLIIGVLLLLVLV) traverse the membrane as a helical segment. Residues 400-416 (ELRRFRQTPPQVTASDS) lie on the Cytoplasmic side of the membrane.

The protein belongs to the major facilitator superfamily. EntS (TC 2.A.1.38) family.

Its subcellular location is the cell inner membrane. Its function is as follows. Component of an export pathway for enterobactin. This Escherichia coli O81 (strain ED1a) protein is Enterobactin exporter EntS.